Consider the following 457-residue polypeptide: NADH-quinone oxidoreductase subunit D (457 aa).

Residues 1 to 23 (MSTHTETPVDGSAETITGAQPYE) form a disordered region.

The protein belongs to the complex I 49 kDa subunit family. In terms of assembly, NDH-1 is composed of 14 different subunits. Subunits NuoB, C, D, E, F, and G constitute the peripheral sector of the complex.

The protein resides in the cell membrane. It carries out the reaction a quinone + NADH + 5 H(+)(in) = a quinol + NAD(+) + 4 H(+)(out). In terms of biological role, NDH-1 shuttles electrons from NADH, via FMN and iron-sulfur (Fe-S) centers, to quinones in the respiratory chain. The immediate electron acceptor for the enzyme in this species is believed to be a menaquinone. Couples the redox reaction to proton translocation (for every two electrons transferred, four hydrogen ions are translocated across the cytoplasmic membrane), and thus conserves the redox energy in a proton gradient. In Parafrankia sp. (strain EAN1pec), this protein is NADH-quinone oxidoreductase subunit D.